Consider the following 436-residue polypeptide: Mitochondrial substrate carrier family protein Y (436 aa).

Residues 1-102 are disordered; that stretch reads MENNNKNINT…NINNNNINKK (102 aa). Over 1–137 the chain is Mitochondrial intermembrane; sequence MENNNKNINT…GGFLAGLSRN (137 aa). Solcar repeat units follow at residues 135 to 226 and 236 to 334; these read SRNV…TLKY and HDTL…LKKQ. Residues 138-158 traverse the membrane as a helical segment; that stretch reads VTRIIGSFSSGMAEESAGYPL. The Mitochondrial matrix portion of the chain corresponds to 159–194; sequence DLIKTRIQLSQSGVSGGGGTNTSIIKIFKDVIKTEG. The chain crosses the membrane as a helical span at residues 195 to 215; the sequence is VIGLFKGLSSPLILSALVTAI. The Mitochondrial intermembrane segment spans residues 216–238; sequence QFGLFEDTLKYFRKHQYFKNHDT. Residues 239–259 form a helical membrane-spanning segment; sequence LSLLFSGSIAGFAQSFITCPV. The Mitochondrial matrix portion of the chain corresponds to 260 to 313; that stretch reads DLVKIQMQIQGIPSSQPNSNNNNNNNKAKGNSYFTKLIYREKGLLGFYQGLSPT. The chain crosses the membrane as a helical span at residues 314–334; sequence LFRDVPGLAIFFTTYETLKKQ. Over 335–347 the chain is Mitochondrial intermembrane; the sequence is FGQPELSTQSPTE. The chain crosses the membrane as a helical span at residues 348–368; that stretch reads FIKSFIPIVLSGGSAGVFYHG. The stretch at 350–436 is one Solcar 3 repeat; the sequence is KSFIPIVLSG…FLVYEMVINL (87 aa). Topologically, residues 369–413 are mitochondrial matrix; that stretch reads LTHPFDIAKTLIQSDRSATKYKGTFDCLKQVYQNQGPKSLFKGFS. A helical membrane pass occupies residues 414-434; that stretch reads AVAIKSFQSNAVGFLVYEMVI. At 435-436 the chain is on the mitochondrial intermembrane side; the sequence is NL.

The protein belongs to the mitochondrial carrier (TC 2.A.29) family.

Its subcellular location is the mitochondrion inner membrane. In terms of biological role, mitochondrial solute carriers shuttle metabolites, nucleotides, and cofactors through the mitochondrial inner membrane. The chain is Mitochondrial substrate carrier family protein Y (mcfY) from Dictyostelium discoideum (Social amoeba).